The following is a 275-amino-acid chain: 3-oxo-isoapionate decarboxylase (275 aa).

The enzyme catalyses 3-oxoisoapionate + H(+) = L-erythrulose + CO2. It participates in carbohydrate metabolism. Involved in catabolism of D-apiose. Catalyzes decarboxylation of 3-oxo-isoapionate to L-erythrulose. This is 3-oxo-isoapionate decarboxylase from Pectobacterium atrosepticum (strain SCRI 1043 / ATCC BAA-672) (Erwinia carotovora subsp. atroseptica).